A 394-amino-acid polypeptide reads, in one-letter code: MAKAKFERTKPHVNIGTIGHVDHGKTSLTAAITIVLAKTGGAQATAYDQIDAAPEEKERGITISTAHVEYETKNRHYAHVDCPGHADYVKNMITGAAQMDGAILVVSAADGPMPQTREHILLAKQVGVPAMVVFLNKIDMVDDPDLLELVEMEVRELLSKYGFPGDEIPIIKGSALQALEGKPEGEKAINELMDAVDSYIPQPVRATDKPFLMPIEDVFSISGRGTVVTGRVESGIIKVGEEIEIVGLKDTQKTTCTGVEMFRKLLDEGQAGDNVGILLRGTKREEVERGQVLAKPGSIKPHDKFEAEVYVLSKEEGGRHTPFTNDYRPQFYFRTTDVTGTIKLPADKQMVMPGDNATFTVELIKPIAMQEGLKFSIREGGRTVGAGVVTKINN.

In terms of domain architecture, tr-type G spans 10-204; that stretch reads KPHVNIGTIG…AVDSYIPQPV (195 aa). A G1 region spans residues 19-26; it reads GHVDHGKT. A GTP-binding site is contributed by 19 to 26; the sequence is GHVDHGKT. Thr-26 is a Mg(2+) binding site. Positions 60-64 are G2; sequence GITIS. Residues 81–84 are G3; that stretch reads DCPG. GTP is bound by residues 81 to 85 and 136 to 139; these read DCPGH and NKID. The interval 136–139 is G4; that stretch reads NKID. The G5 stretch occupies residues 174-176; that stretch reads SAL.

The protein belongs to the TRAFAC class translation factor GTPase superfamily. Classic translation factor GTPase family. EF-Tu/EF-1A subfamily. Monomer.

It is found in the cytoplasm. It carries out the reaction GTP + H2O = GDP + phosphate + H(+). GTP hydrolase that promotes the GTP-dependent binding of aminoacyl-tRNA to the A-site of ribosomes during protein biosynthesis. The chain is Elongation factor Tu from Rickettsia peacockii (strain Rustic).